The chain runs to 409 residues: MQIYKVGGAVRDRLLGQPVTDIDWVVVGASTEDMLVKGYRPVGTDFPVFLHPLTNEEYALARTERKSGVGYGGFVFHASPEVTLEQDLIRRDLTINAMAEDKDGNLTDPYNGQKDLEARILRHVSPAFAEDPLRVLRVARFAARYARYGFTIAPETLGLMRQLSESGELKALTAERSWKEISRALMEEQPQVFIQVLHDCGALKELMPEVEALFGVPQPAAHHPEIDTGVHVLSVLEQSAIHKHPLTVRWACLLHDLGKGLTPEAEWPRHIAHEHTGLRLIKAVNERFRVPRECQELALLVGQYHTHGHRALELKPSTLLELLQSFDVYRRPQRFEEFIAACEMDARGRHGFEQRSYPQADYLRGAAQAARTVSVQPLLEKGFKGKELGDALKNERLKALKIYKAEHVA.

ATP is bound by residues Gly8 and Arg11. 2 residues coordinate CTP: Gly8 and Arg11. Mg(2+) is bound by residues Asp21 and Asp23. Arg91, Arg137, and Arg140 together coordinate ATP. Positions 91, 137, and 140 each coordinate CTP. One can recognise an HD domain in the interval 228 to 329 (TGVHVLSVLE…LELLQSFDVY (102 aa)).

It belongs to the tRNA nucleotidyltransferase/poly(A) polymerase family. Bacterial CCA-adding enzyme type 1 subfamily. Monomer. Can also form homodimers and oligomers. Mg(2+) serves as cofactor. The cofactor is Ni(2+).

The catalysed reaction is a tRNA precursor + 2 CTP + ATP = a tRNA with a 3' CCA end + 3 diphosphate. The enzyme catalyses a tRNA with a 3' CCA end + 2 CTP + ATP = a tRNA with a 3' CCACCA end + 3 diphosphate. Functionally, catalyzes the addition and repair of the essential 3'-terminal CCA sequence in tRNAs without using a nucleic acid template. Adds these three nucleotides in the order of C, C, and A to the tRNA nucleotide-73, using CTP and ATP as substrates and producing inorganic pyrophosphate. tRNA 3'-terminal CCA addition is required both for tRNA processing and repair. Also involved in tRNA surveillance by mediating tandem CCA addition to generate a CCACCA at the 3' terminus of unstable tRNAs. While stable tRNAs receive only 3'-terminal CCA, unstable tRNAs are marked with CCACCA and rapidly degraded. In Pseudomonas savastanoi pv. phaseolicola (strain 1448A / Race 6) (Pseudomonas syringae pv. phaseolicola (strain 1448A / Race 6)), this protein is Multifunctional CCA protein.